Here is a 561-residue protein sequence, read N- to C-terminus: Methionine--tRNA ligase (561 aa).

Residues 11–21 carry the 'HIGH' region motif; the sequence is PYVNTVPHLGN. 4 residues coordinate Zn(2+): Cys143, Cys146, Cys156, and Cys159. Residue Lys334 participates in ATP binding.

This sequence belongs to the class-I aminoacyl-tRNA synthetase family. MetG type 1 subfamily. The cofactor is Zn(2+).

The protein resides in the cytoplasm. The enzyme catalyses tRNA(Met) + L-methionine + ATP = L-methionyl-tRNA(Met) + AMP + diphosphate. Its function is as follows. Is required not only for elongation of protein synthesis but also for the initiation of all mRNA translation through initiator tRNA(fMet) aminoacylation. The polypeptide is Methionine--tRNA ligase (Ignicoccus hospitalis (strain KIN4/I / DSM 18386 / JCM 14125)).